The following is a 263-amino-acid chain: Follistatin-related protein 3 (263 aa).

Residues 1–26 form the signal peptide; it reads MRPGAPGPLWPLPWGALAWAVGFVSS. The TB domain occupies 36 to 107; that stretch reads GVCWLQQGQE…SCDGVECGPG (72 aa). Intrachain disulfides connect Cys38/Cys61, Cys48/Cys92, Cys62/Cys95, Cys99/Cys110, Cys104/Cys119, Cys121/Cys153, Cys125/Cys146, Cys135/Cys167, Cys171/Cys182, Cys176/Cys192, Cys195/Cys229, Cys200/Cys222, and Cys211/Cys243. An N-linked (GlcNAc...) asparagine glycan is attached at Asn73. In terms of domain architecture, Follistatin-like 1 spans 99–119; it reads CDGVECGPGKACRMLGGRPRC. In terms of domain architecture, Kazal-like 1 spans 113 to 169; it reads LGGRPRCECAPDCSGLPARLQVCGSDGATYRDECELRAARCRGHPDLSVMYRGRCRK. Positions 170–193 constitute a Follistatin-like 2 domain; sequence SCEHVVCPRPQSCVVDQTGSAHCV. One can recognise a Kazal-like 2 domain in the interval 189–245; it reads SAHCVVCRAAPCPVPSSPGQELCGNNNVTYISSCHMRQATCFLGRSIGVRHAGSCAG. N-linked (GlcNAc...) asparagine glycosylation occurs at Asn215. A disordered region spans residues 242–263; the sequence is SCAGTPEEPPGGESAEEEENFV. The residue at position 255 (Ser255) is a Phosphoserine; by FAM20C.

Interacts with INHBA and INHBB. Interacts with FN1. Interacts with ADAM12. Isoform 2 interacts with MLLT10; the interaction enhances MLLT10 in vitro transcriptional activity and self-association. Interacts with MSTN. In terms of tissue distribution, expressed in a wide range of tissues.

It is found in the secreted. Its subcellular location is the nucleus. Its function is as follows. Isoform 1 or the secreted form is a binding and antagonizing protein for members of the TGF-beta family, such as activin, BMP2 and MSTN. Inhibits activin A-, activin B-, BMP2- and MSDT-induced cellular signaling; more effective on activin A than on activin B. Involved in bone formation; inhibits osteoclast differentiation. Involved in hematopoiesis; involved in differentiation of hemopoietic progenitor cells, increases hematopoietic cell adhesion to fibronectin and seems to contribute to the adhesion of hematopoietic precursor cells to the bone marrow stroma. Isoform 2 or the nuclear form is probably involved in transcriptional regulation via interaction with MLLT10. The chain is Follistatin-related protein 3 (FSTL3) from Homo sapiens (Human).